Consider the following 66-residue polypeptide: Large ribosomal subunit protein bL35 (66 aa).

Positions 1–16 (MPKQKTHRASAKRFKR) are enriched in basic residues. Residues 1-21 (MPKQKTHRASAKRFKRTGSGG) form a disordered region.

Belongs to the bacterial ribosomal protein bL35 family.

This chain is Large ribosomal subunit protein bL35, found in Streptococcus sanguinis (strain SK36).